Consider the following 156-residue polypeptide: MDINITLIGQMITFAIFVGFTMKFVWPPLRKALEERREKIAEGLASADRASRELEVAKRQSAEILREAKAKATEIVENAYVRAHKVDEQAKEEAIAAADKIKSMAIAEIEQEKVKAKEQLKQELVNLAMAAASKIIAASVDEKASKKVLEDFVEKV.

A helical membrane pass occupies residues 5–27 (ITLIGQMITFAIFVGFTMKFVWP).

It belongs to the ATPase B chain family. In terms of assembly, F-type ATPases have 2 components, F(1) - the catalytic core - and F(0) - the membrane proton channel. F(1) has five subunits: alpha(3), beta(3), gamma(1), delta(1), epsilon(1). F(0) has three main subunits: a(1), b(2) and c(10-14). The alpha and beta chains form an alternating ring which encloses part of the gamma chain. F(1) is attached to F(0) by a central stalk formed by the gamma and epsilon chains, while a peripheral stalk is formed by the delta and b chains.

It is found in the cell inner membrane. Functionally, f(1)F(0) ATP synthase produces ATP from ADP in the presence of a proton or sodium gradient. F-type ATPases consist of two structural domains, F(1) containing the extramembraneous catalytic core and F(0) containing the membrane proton channel, linked together by a central stalk and a peripheral stalk. During catalysis, ATP synthesis in the catalytic domain of F(1) is coupled via a rotary mechanism of the central stalk subunits to proton translocation. Component of the F(0) channel, it forms part of the peripheral stalk, linking F(1) to F(0). The sequence is that of ATP synthase subunit b from Francisella tularensis subsp. tularensis (strain SCHU S4 / Schu 4).